The primary structure comprises 1294 residues: uncharacterized protein (1294 aa).

Residues 1–375 (MSQQENGDVA…RNFKLNFSDY (375 aa)) are Extracellular-facing. The ABC transporter 1 domain occupies 28-287 (LHVRDLSIVA…FESIGYHVPQ (260 aa)). N-linked (GlcNAc...) asparagine glycosylation is present at N41. 62-69 (GGSGSGKT) lines the ATP pocket. 6 N-linked (GlcNAc...) asparagine glycosylation sites follow: N86, N101, N151, N341, N349, and N371. A helical membrane pass occupies residues 376 to 396 (VTLISTFAEPLIIGTVCGWIY). Residues 397–495 (YKPDKSSIGG…EADARKFFYQ (99 aa)) lie on the Cytoplasmic side of the membrane. Residues 496–516 (FAVVFLCQLSCSGLSMLSVAV) form a helical membrane-spanning segment. The Extracellular portion of the chain corresponds to 517–530 (SRDFSKASLVGNMT). N-linked (GlcNAc...) asparagine glycosylation is present at N528. The chain crosses the membrane as a helical span at residues 531–551 (FTVLSMGCGFFVNAKVMPVYV). The Cytoplasmic portion of the chain corresponds to 552–604 (RWIKYIAFTWYSFGTLMSSTFTNSYCTTDNLDECLGNQILEVYGFPRNWITVP). A helical transmembrane segment spans residues 605 to 625 (AVVLLCWSVGYFVVGAIILYL). The Extracellular segment spans residues 626-1038 (HKIDITLQNE…TTTRRSFDSL (413 aa)). The ABC transporter 2 domain occupies 679–941 (IKLEDIDLRV…FTELGYNCPS (263 aa)). 727–734 (GPSGSGKS) serves as a coordination point for ATP. N-linked (GlcNAc...) asparagine glycosylation is present at N983. The chain crosses the membrane as a helical span at residues 1039 to 1059 (MARIAQIPGLGVIFALFFAPV). Residues 1060–1120 (KHNYTSISNR…PFFLAYMTLE (61 aa)) lie on the Cytoplasmic side of the membrane. The chain crosses the membrane as a helical span at residues 1121-1141 (LPLSALASVLYAVFTVLACGL). Residues 1142-1266 (PRTAGNFFAT…YGLVRNTQKY (125 aa)) lie on the Extracellular side of the membrane. Residues 1267–1287 (LGIIVCVAIIYRLIAFFILKA) form a helical membrane-spanning segment. At 1288–1294 (KLEWIKW) the chain is on the cytoplasmic side.

The protein belongs to the ABC transporter superfamily. ABCG family. PDR (TC 3.A.1.205) subfamily.

Its subcellular location is the membrane. This is an uncharacterized protein from Saccharomyces cerevisiae (strain ATCC 204508 / S288c) (Baker's yeast).